A 520-amino-acid polypeptide reads, in one-letter code: NAD(P)H-quinone oxidoreductase subunit 2 (520 aa).

14 consecutive transmembrane segments (helical) span residues 15–35 (ILPE…DLIL), 42–62 (WIGY…YFQW), 79–99 (LSII…LMSI), 106–126 (GTAL…GMFV), 132–152 (LVMI…LTGY), 167–187 (LLIG…LYGL), 210–230 (LGAV…ISAA), 244–264 (PTPV…ALAI), 280–300 (FVFT…ALAQ), 306–326 (MLAY…IAGT), 334–354 (IFYL…IILF), 378–398 (LGLS…GFFG), 400–420 (IYLF…LGLV), and 466–486 (VGLV…NPLF).

It belongs to the complex I subunit 2 family. In terms of assembly, NDH-1 can be composed of about 15 different subunits; different subcomplexes with different compositions have been identified which probably have different functions.

Its subcellular location is the cellular thylakoid membrane. The catalysed reaction is a plastoquinone + NADH + (n+1) H(+)(in) = a plastoquinol + NAD(+) + n H(+)(out). The enzyme catalyses a plastoquinone + NADPH + (n+1) H(+)(in) = a plastoquinol + NADP(+) + n H(+)(out). In terms of biological role, NDH-1 shuttles electrons from an unknown electron donor, via FMN and iron-sulfur (Fe-S) centers, to quinones in the respiratory and/or the photosynthetic chain. The immediate electron acceptor for the enzyme in this species is believed to be plastoquinone. Couples the redox reaction to proton translocation, and thus conserves the redox energy in a proton gradient. Cyanobacterial NDH-1 also plays a role in inorganic carbon-concentration. In Trichormus variabilis (strain ATCC 29413 / PCC 7937) (Anabaena variabilis), this protein is NAD(P)H-quinone oxidoreductase subunit 2.